The chain runs to 163 residues: NADH-quinone oxidoreductase subunit I (163 aa).

2 4Fe-4S ferredoxin-type domains span residues 53–83 (LRRY…IEAG) and 94–123 (VRYD…EGPN). Residues Cys-63, Cys-66, Cys-69, Cys-73, Cys-103, Cys-106, Cys-109, and Cys-113 each coordinate [4Fe-4S] cluster.

It belongs to the complex I 23 kDa subunit family. As to quaternary structure, NDH-1 is composed of 14 different subunits. Subunits NuoA, H, J, K, L, M, N constitute the membrane sector of the complex. It depends on [4Fe-4S] cluster as a cofactor.

It is found in the cell inner membrane. The enzyme catalyses a quinone + NADH + 5 H(+)(in) = a quinol + NAD(+) + 4 H(+)(out). Its function is as follows. NDH-1 shuttles electrons from NADH, via FMN and iron-sulfur (Fe-S) centers, to quinones in the respiratory chain. The immediate electron acceptor for the enzyme in this species is believed to be ubiquinone. Couples the redox reaction to proton translocation (for every two electrons transferred, four hydrogen ions are translocated across the cytoplasmic membrane), and thus conserves the redox energy in a proton gradient. The chain is NADH-quinone oxidoreductase subunit I from Bartonella henselae (strain ATCC 49882 / DSM 28221 / CCUG 30454 / Houston 1) (Rochalimaea henselae).